A 1051-amino-acid chain; its full sequence is Kinesin-like protein KIN-UC (1051 aa).

3 stretches are compositionally biased toward low complexity: residues 1 to 12 (MSSSNSSSAVRS), 28 to 39 (NSNHAVSLSSSS), and 64 to 90 (SASS…PVRR). 2 disordered regions span residues 1 to 39 (MSSS…SSSS) and 51 to 109 (PGIA…RVSV). In terms of domain architecture, Kinesin motor spans 104–441 (RVRVSVRVRP…IMFGQRAMKI (338 aa)). An ATP-binding site is contributed by 189–196 (GQTGTGKT). Residues 411–419 (RTSLIITIG) carry the D-BOX motif. Coiled coils occupy residues 452-534 (DYES…QKDQ) and 568-761 (DTSQ…KRYM). Residues 753 to 766 (NVVEEKRYMKEDLS) show a composition bias toward basic and acidic residues. The segment at 753–788 (NVVEEKRYMKEDLSKGSAESGAQTGSQRSQGLKKSL) is disordered. Positions 772–788 (SGAQTGSQRSQGLKKSL) are enriched in polar residues. 3 ARM repeats span residues 792–831 (RATM…NLAA), 833–873 (EANQ…NLAM), and 875–915 (EKSQ…NLCG). One copy of the ARM 4; degenerate repeat lies at 917 to 956 (EKFLKLLKEEEGIKGLLTMAQSGNIDIIAQVARGMANFAK).

It belongs to the TRAFAC class myosin-kinesin ATPase superfamily. Kinesin family. Ungrouped subfamily. As to quaternary structure, interacts (via C-terminus) with NEK5. As to expression, expressed in young root hair-forming cells and in root hair-producing cells at the boundary between the hypocotyl and root. Expressed in cotyledons, young leaves, trichomes and flowers.

The protein localises to the cytoplasm. It is found in the cytoskeleton. The protein resides in the spindle. Its subcellular location is the phragmoplast. Its function is as follows. Acts as a plus-end microtubule-dependent motor protein. Involved in the control of root hair tip growth by promoting microtubule depolymerization and limiting the accumulation of endoplasmic microtubules. In vitro, binds to polymerized actin through ARM repeats, and to polymerized tubulin through N-terminal motor domain. The polypeptide is Kinesin-like protein KIN-UC (Arabidopsis thaliana (Mouse-ear cress)).